The primary structure comprises 256 residues: Acetyl-coenzyme A carboxylase carboxyl transferase subunit alpha (256 aa).

A CoA carboxyltransferase C-terminal domain is found at 1–236; it reads MTDVARILKE…KEHLKTEINQ (236 aa).

The protein belongs to the AccA family. As to quaternary structure, acetyl-CoA carboxylase is a heterohexamer composed of biotin carboxyl carrier protein (AccB), biotin carboxylase (AccC) and two subunits each of ACCase subunit alpha (AccA) and ACCase subunit beta (AccD).

The protein resides in the cytoplasm. It catalyses the reaction N(6)-carboxybiotinyl-L-lysyl-[protein] + acetyl-CoA = N(6)-biotinyl-L-lysyl-[protein] + malonyl-CoA. The protein operates within lipid metabolism; malonyl-CoA biosynthesis; malonyl-CoA from acetyl-CoA: step 1/1. In terms of biological role, component of the acetyl coenzyme A carboxylase (ACC) complex. First, biotin carboxylase catalyzes the carboxylation of biotin on its carrier protein (BCCP) and then the CO(2) group is transferred by the carboxyltransferase to acetyl-CoA to form malonyl-CoA. This chain is Acetyl-coenzyme A carboxylase carboxyl transferase subunit alpha, found in Streptococcus uberis (strain ATCC BAA-854 / 0140J).